The following is a 245-amino-acid chain: tRNA1(Val) (adenine(37)-N6)-methyltransferase (245 aa).

The protein belongs to the methyltransferase superfamily. tRNA (adenine-N(6)-)-methyltransferase family.

It is found in the cytoplasm. The catalysed reaction is adenosine(37) in tRNA1(Val) + S-adenosyl-L-methionine = N(6)-methyladenosine(37) in tRNA1(Val) + S-adenosyl-L-homocysteine + H(+). Functionally, specifically methylates the adenine in position 37 of tRNA(1)(Val) (anticodon cmo5UAC). The protein is tRNA1(Val) (adenine(37)-N6)-methyltransferase of Shigella sonnei (strain Ss046).